The primary structure comprises 343 residues: Protein RecA (343 aa).

66–73 (GPESSGKT) is a binding site for ATP.

The protein belongs to the RecA family.

The protein resides in the cytoplasm. In terms of biological role, can catalyze the hydrolysis of ATP in the presence of single-stranded DNA, the ATP-dependent uptake of single-stranded DNA by duplex DNA, and the ATP-dependent hybridization of homologous single-stranded DNAs. It interacts with LexA causing its activation and leading to its autocatalytic cleavage. In Dechloromonas aromatica (strain RCB), this protein is Protein RecA.